We begin with the raw amino-acid sequence, 438 residues long: GDP-mannose 6-dehydrogenase (438 aa).

6 residues coordinate NAD(+): Y10, V11, D30, K35, T86, and T124. The GDP-alpha-D-mannuronate site is built by E161, K210, N214, H217, N225, Y256, Y257, R259, F262, and G265. C268 is an active-site residue. K271 contacts NAD(+). GDP-alpha-D-mannuronate is bound at residue K324. R331 is an NAD(+) binding site.

It belongs to the UDP-glucose/GDP-mannose dehydrogenase family.

It catalyses the reaction GDP-alpha-D-mannose + 2 NAD(+) + H2O = GDP-alpha-D-mannuronate + 2 NADH + 3 H(+). Its pathway is glycan biosynthesis; alginate biosynthesis. In terms of biological role, catalyzes the oxidation of guanosine diphospho-D-mannose (GDP-D-mannose) to GDP-D-mannuronic acid, a precursor for alginate polymerization. The alginate layer causes a mucoid phenotype and provides a protective barrier against host immune defenses and antibiotics. This chain is GDP-mannose 6-dehydrogenase (algD), found in Pseudomonas syringae pv. syringae.